We begin with the raw amino-acid sequence, 313 residues long: D-apiose import binding protein (313 aa).

Positions 1 to 26 are cleaved as a signal peptide; it reads MKLTRRLTLAAFASVLALGTAAPAFS. D-apiofuranose is bound by residues asparagine 39, 115-116, 162-164, arginine 168, asparagine 218, aspartate 243, and glutamine 263; these read DR and DTN.

It belongs to the bacterial solute-binding protein 2 family.

It localises to the periplasm. In terms of biological role, part of an ABC transporter complex involved in D-apiose import. The protein is D-apiose import binding protein of Rhizobium rhizogenes (strain K84 / ATCC BAA-868) (Agrobacterium radiobacter).